The following is a 293-amino-acid chain: 33 kDa chaperonin (293 aa).

Intrachain disulfides connect Cys-235–Cys-237 and Cys-267–Cys-270.

The protein belongs to the HSP33 family. Post-translationally, under oxidizing conditions two disulfide bonds are formed involving the reactive cysteines. Under reducing conditions zinc is bound to the reactive cysteines and the protein is inactive.

It localises to the cytoplasm. In terms of biological role, redox regulated molecular chaperone. Protects both thermally unfolding and oxidatively damaged proteins from irreversible aggregation. Plays an important role in the bacterial defense system toward oxidative stress. This chain is 33 kDa chaperonin, found in Deinococcus radiodurans (strain ATCC 13939 / DSM 20539 / JCM 16871 / CCUG 27074 / LMG 4051 / NBRC 15346 / NCIMB 9279 / VKM B-1422 / R1).